Consider the following 773-residue polypeptide: Ribosomal protein S6 kinase alpha-4 (773 aa).

The Protein kinase 1 domain maps to F33–F301. ATP contacts are provided by residues L39 to V47 and K65. Catalysis depends on D161, which acts as the Proton acceptor. S196 carries the post-translational modification Phosphoserine; by autocatalysis. One can recognise an AGC-kinase C-terminal domain in the interval Q302–N371. S343 is modified (phosphoserine; by MAPK1, MAPK3 and MAPK14). S347 carries the post-translational modification Phosphoserine. Phosphoserine; by autocatalysis occurs at positions 360 and 365. Residues L417 to C425 and K440 contribute to the ATP site. In terms of domain architecture, Protein kinase 2 spans L417–L674. D530 serves as the catalytic Proton acceptor. Position 542 is a phosphothreonine (T542). T568 carries the phosphothreonine; by MAPK1, MAPK3 and MAPK14 modification. Phosphoserine is present on residues S634 and S678. Disordered stretches follow at residues L674–P696 and A728–S773. T687 carries the phosphothreonine modification. S737 and S745 each carry phosphoserine; by autocatalysis.

The protein belongs to the protein kinase superfamily. AGC Ser/Thr protein kinase family. S6 kinase subfamily. In terms of assembly, forms a complex with either MAPK1/ERK2 or MAPK3/ERK1 in quiescent cells which transiently dissociates following mitogenic stimulation. Also associates with MAPK14/p38-alpha. Activated RPS6KA4 associates with and phosphorylates the NF-kappa-B p65 subunit RELA. Requires Mg(2+) as cofactor. In terms of processing, ser-343 and Thr-568 phosphorylation is required for kinase activity. Ser-343 and Ser-196 are autophosphorylated by the C-terminal kinase domain, and their phosphorylation is essential for the catalytic activity of the N-terminal kinase domain. Phosphorylated at Ser-343, Thr-568 and Thr-687 by MAPK1/ERK2, MAPK3/ERK1 and MAPK14/p38-alpha. Autophosphorylated at Ser-737 and Ser-745 by the N-terminal kinase domain.

The protein resides in the nucleus. The enzyme catalyses L-seryl-[protein] + ATP = O-phospho-L-seryl-[protein] + ADP + H(+). It carries out the reaction L-threonyl-[protein] + ATP = O-phospho-L-threonyl-[protein] + ADP + H(+). Activated by phosphorylation at Ser-343, Thr-568 and Thr-687 by MAPK1/ERK2, MAPK3/ERK1 and MAPK14/p38-alpha, and by further autophosphorylation of Ser-196, Ser-360 and Ser-365 by the activated C-terminal kinase domain. Serine/threonine-protein kinase that is required for the mitogen or stress-induced phosphorylation of the transcription factors CREB1 and ATF1 and for the regulation of the transcription factor RELA, and that contributes to gene activation by histone phosphorylation and functions in the regulation of inflammatory genes. Phosphorylates CREB1 and ATF1 in response to mitogenic or stress stimuli such as UV-C irradiation, epidermal growth factor (EGF) and anisomycin. Plays an essential role in the control of RELA transcriptional activity in response to TNF. Phosphorylates 'Ser-10' of histone H3 in response to mitogenics, stress stimuli and EGF, which results in the transcriptional activation of several immediate early genes, including proto-oncogenes c-fos/FOS and c-jun/JUN. May also phosphorylate 'Ser-28' of histone H3. Mediates the mitogen- and stress-induced phosphorylation of high mobility group protein 1 (HMGN1/HMG14). In lipopolysaccharide-stimulated primary macrophages, acts downstream of the Toll-like receptor TLR4 to limit the production of pro-inflammatory cytokines. Functions probably by inducing transcription of the MAP kinase phosphatase DUSP1 and the anti-inflammatory cytokine interleukin 10 (IL10), via CREB1 and ATF1 transcription factors. This chain is Ribosomal protein S6 kinase alpha-4 (Rps6ka4), found in Mus musculus (Mouse).